Reading from the N-terminus, the 228-residue chain is Lipoprotein-releasing system ATP-binding protein LolD (228 aa).

Positions 6–225 constitute an ABC transporter domain; sequence LEAKDVYKHF…ILHMQDGLWV (220 aa). 42–49 serves as a coordination point for ATP; it reads GASGSGKS.

This sequence belongs to the ABC transporter superfamily. Lipoprotein translocase (TC 3.A.1.125) family. In terms of assembly, the complex is composed of two ATP-binding proteins (LolD) and two transmembrane proteins (LolC and LolE).

The protein localises to the cell inner membrane. Functionally, part of the ABC transporter complex LolCDE involved in the translocation of mature outer membrane-directed lipoproteins, from the inner membrane to the periplasmic chaperone, LolA. Responsible for the formation of the LolA-lipoprotein complex in an ATP-dependent manner. This chain is Lipoprotein-releasing system ATP-binding protein LolD, found in Acinetobacter baylyi (strain ATCC 33305 / BD413 / ADP1).